We begin with the raw amino-acid sequence, 499 residues long: Probable cytosol aminopeptidase (499 aa).

The Mn(2+) site is built by K263 and D268. K275 is a catalytic residue. D286, D345, and E347 together coordinate Mn(2+). The active site involves R349.

The protein belongs to the peptidase M17 family. Mn(2+) is required as a cofactor.

It localises to the cytoplasm. It carries out the reaction Release of an N-terminal amino acid, Xaa-|-Yaa-, in which Xaa is preferably Leu, but may be other amino acids including Pro although not Arg or Lys, and Yaa may be Pro. Amino acid amides and methyl esters are also readily hydrolyzed, but rates on arylamides are exceedingly low.. It catalyses the reaction Release of an N-terminal amino acid, preferentially leucine, but not glutamic or aspartic acids.. Presumably involved in the processing and regular turnover of intracellular proteins. Catalyzes the removal of unsubstituted N-terminal amino acids from various peptides. The chain is Probable cytosol aminopeptidase from Chlamydia caviae (strain ATCC VR-813 / DSM 19441 / 03DC25 / GPIC) (Chlamydophila caviae).